Consider the following 289-residue polypeptide: Rhodopsin (289 aa).

The Extracellular segment spans residues 1–7 (YLVSPAA). A helical transmembrane segment spans residues 8–32 (YAALGAYMFLLILIGFPVNFLTLYV). At 33–44 (TLEHKKLRTPLN) the chain is on the cytoplasmic side. A helical transmembrane segment spans residues 45–67 (YILLNLAVADLFMVLGGFTTTMY). The Extracellular portion of the chain corresponds to 68–81 (TSMHGYFVLGRLGC). The cysteines at positions 81 and 158 are disulfide-linked. The helical transmembrane segment at 82-104 (NLEGFFATLGGEIALWSLVVLAI) threads the bilayer. Residues 105–107 (ERW) carry the 'Ionic lock' involved in activated form stabilization motif. Residues 105–123 (ERWIVVCKPISNFRFTEDN) are Cytoplasmic-facing. Residues 124–144 (AIMGLAFSWVMALTCAVPPLV) form a helical membrane-spanning segment. At 145–173 (GWSRYIPEGMQCSCGVDYYTRAEGFNNES) the chain is on the extracellular side. The N-linked (GlcNAc...) asparagine glycan is linked to Asn171. The chain crosses the membrane as a helical span at residues 174 to 195 (FVIYMFIVHFPIPLSVIFFCYG). Residues 196–223 (RLLCAVKEAAAAQQESETTQRAEKEVSR) are Cytoplasmic-facing. Residues 224 to 245 (MVVILVIGFLVCWLPYASVAWW) traverse the membrane as a helical segment. Over 246–257 (IFCNQGSDFGPI) the chain is Extracellular. The chain crosses the membrane as a helical span at residues 258–279 (FMTLPSFFAKRPAIYNPMIYIC). Position 267 is an N6-(retinylidene)lysine (Lys267). Residues 280 to 289 (MNKQFRHCMI) are Cytoplasmic-facing.

The protein belongs to the G-protein coupled receptor 1 family. Opsin subfamily. In terms of processing, phosphorylated on some or all of the serine and threonine residues present in the C-terminal region. Post-translationally, contains one covalently linked retinal chromophore.

Its subcellular location is the membrane. It localises to the cell projection. The protein resides in the cilium. It is found in the photoreceptor outer segment. Its function is as follows. Photoreceptor required for image-forming vision at low light intensity. While most salt water fish species use retinal as chromophore, most freshwater fish use 3-dehydroretinal, or a mixture of retinal and 3-dehydroretinal. Light-induced isomerization of 11-cis to all-trans retinal triggers a conformational change that activates signaling via G-proteins. Subsequent receptor phosphorylation mediates displacement of the bound G-protein alpha subunit by arrestin and terminates signaling. The polypeptide is Rhodopsin (rho) (Batrachocottus multiradiatus (Baikal sculpin)).